We begin with the raw amino-acid sequence, 448 residues long: N-succinylarginine dihydrolase (448 aa).

Residues 20–29 (AGLLFGNEAS), N111, and 138–139 (HR) each bind substrate. E175 is an active-site residue. A substrate-binding site is contributed by R213. Residue H249 is part of the active site. Residues D251 and N360 each coordinate substrate. The active-site Nucleophile is the C366.

The protein belongs to the succinylarginine dihydrolase family. In terms of assembly, homodimer.

The catalysed reaction is N(2)-succinyl-L-arginine + 2 H2O + 2 H(+) = N(2)-succinyl-L-ornithine + 2 NH4(+) + CO2. It participates in amino-acid degradation; L-arginine degradation via AST pathway; L-glutamate and succinate from L-arginine: step 2/5. Its function is as follows. Catalyzes the hydrolysis of N(2)-succinylarginine into N(2)-succinylornithine, ammonia and CO(2). The sequence is that of N-succinylarginine dihydrolase from Shigella dysenteriae serotype 1 (strain Sd197).